We begin with the raw amino-acid sequence, 389 residues long: 5-hydroxytryptamine receptor 1B (389 aa).

The segment at 1 to 27 (MEETNTHCAPPPPAGSQTGVSQANLSS) is disordered. Over 1–45 (MEETNTHCAPPPPAGSQTGVSQANLSSAPPNCSTEGYIYQDSIAL) the chain is Extracellular. Over residues 15–27 (GSQTGVSQANLSS) the composition is skewed to polar residues. N-linked (GlcNAc...) asparagine glycosylation is found at N24 and N31. A helical membrane pass occupies residues 46–71 (PWKVLLILVLALFTLATTLSNAFVIA). Topologically, residues 72-85 (TVYRTRKLHTPANY) are cytoplasmic. Residues 86-110 (LIASLAVTDLLVSILVMPISTMYTV) traverse the membrane as a helical segment. The Extracellular segment spans residues 111–118 (TGRWTLGQ). Residues 119–144 (VVCDFWLSSDITCCTASILHLCVIAL) form a helical membrane-spanning segment. A disulfide bridge connects residues C121 and C198. 2 residues coordinate ergotamine: D128 and T133. The DRY motif; important for ligand-induced conformation changes and signaling motif lies at 145-147 (DRY). Residues 145–164 (DRYWAITDAVEYSAKRTPKR) are Cytoplasmic-facing. The chain crosses the membrane as a helical span at residues 165-183 (AAVMIALVWVFSISISLPP). Residues 184-204 (FFWRQAKAEEEVSDCRVNTDH) are Extracellular-facing. Residue V200 participates in ergotamine binding. Residues 205-228 (MLYTVYSTVGAFYFPTLLLIALYG) traverse the membrane as a helical segment. The Cytoplasmic portion of the chain corresponds to 229–314 (RIYVEARSRI…AARERKATKT (86 aa)). The segment covering 258–271 (DSPGSTSSVTSVNS) has biased composition (polar residues). The tract at residues 258–281 (DSPGSTSSVTSVNSRAPDVPSESG) is disordered. The helical transmembrane segment at 315-336 (LGIILGAFIVCWLPFFIISLVM) threads the bilayer. Over 337-346 (PICKDACWFH) the chain is Extracellular. The chain crosses the membrane as a helical span at residues 347–369 (LAIFDFFTWLGYLNSLINPIIYT). An NPxxY motif; important for ligand-induced conformation changes and signaling motif is present at residues 364–368 (NPIIY). At 370 to 389 (MSNEDFKQAFHKLIRFKCTG) the chain is on the cytoplasmic side. C387 is lipidated: S-palmitoyl cysteine.

Belongs to the G-protein coupled receptor 1 family. Homodimer. Heterodimer with HTR1D. Post-translationally, phosphorylated. Desensitization of the receptor may be mediated by its phosphorylation. In terms of processing, palmitoylated.

Its subcellular location is the cell membrane. G-protein coupled receptor for 5-hydroxytryptamine (serotonin). Also functions as a receptor for ergot alkaloid derivatives, various anxiolytic and antidepressant drugs and other psychoactive substances, such as lysergic acid diethylamide (LSD). Ligand binding causes a conformation change that triggers signaling via guanine nucleotide-binding proteins (G proteins) and modulates the activity of downstream effectors, such as adenylate cyclase. HTR1B is coupled to G(i)/G(o) G alpha proteins and mediates inhibitory neurotransmission by inhibiting adenylate cyclase activity. Arrestin family members inhibit signaling via G proteins and mediate activation of alternative signaling pathways. Regulates the release of 5-hydroxytryptamine, dopamine and acetylcholine in the brain, and thereby affects neural activity, nociceptive processing, pain perception, mood and behavior. Besides, plays a role in vasoconstriction of cerebral arteries. The chain is 5-hydroxytryptamine receptor 1B (HTR1B) from Felis catus (Cat).